The sequence spans 41 residues: Antimicrobial protein PN-AMP1 (41 aa).

The residue at position 1 (Gln-1) is a Pyrrolidone carboxylic acid. The 41-residue stretch at 1–41 (QQCGRQASGRLCGNRLCCSQWGYCGSTASYCGAGCQSQCRS) folds into the Chitin-binding type-1 domain. 4 cysteine pairs are disulfide-bonded: Cys-3–Cys-18, Cys-12–Cys-24, Cys-17–Cys-31, and Cys-35–Cys-39.

Functionally, chitin-binding protein with a defensive function against numerous chitin containing fungal pathogens. It is also an inhibitor of Gram-positive bacteria such as B.subtilis. This is Antimicrobial protein PN-AMP1 from Ipomoea nil (Japanese morning glory).